Reading from the N-terminus, the 570-residue chain is Urease subunit alpha (570 aa).

Positions 131 to 570 constitute a Urease domain; the sequence is GGFDSHIHFI…LPMAQRYFMY (440 aa). Residues His136, His138, and Lys219 each coordinate Ni(2+). N6-carboxylysine is present on Lys219. His221 contacts substrate. Ni(2+) contacts are provided by His248 and His274. The active-site Proton donor is His322. Asp362 contacts Ni(2+).

The protein belongs to the metallo-dependent hydrolases superfamily. Urease alpha subunit family. Heterotrimer of UreA (gamma), UreB (beta) and UreC (alpha) subunits. Three heterotrimers associate to form the active enzyme. Ni cation is required as a cofactor. In terms of processing, carboxylation allows a single lysine to coordinate two nickel ions.

It is found in the cytoplasm. The catalysed reaction is urea + 2 H2O + H(+) = hydrogencarbonate + 2 NH4(+). The protein operates within nitrogen metabolism; urea degradation; CO(2) and NH(3) from urea (urease route): step 1/1. In Rhodopseudomonas palustris (strain BisB18), this protein is Urease subunit alpha.